The following is a 117-amino-acid chain: Large ribosomal subunit protein eL18 (117 aa).

It belongs to the eukaryotic ribosomal protein eL18 family.

This Halobacterium salinarum (strain ATCC 29341 / DSM 671 / R1) protein is Large ribosomal subunit protein eL18.